The sequence spans 143 residues: D-aminoacyl-tRNA deacylase (143 aa).

A Gly-cisPro motif, important for rejection of L-amino acids motif is present at residues 135–136; the sequence is GP.

Belongs to the DTD family. As to quaternary structure, homodimer.

It is found in the cytoplasm. The catalysed reaction is glycyl-tRNA(Ala) + H2O = tRNA(Ala) + glycine + H(+). It carries out the reaction a D-aminoacyl-tRNA + H2O = a tRNA + a D-alpha-amino acid + H(+). An aminoacyl-tRNA editing enzyme that deacylates mischarged D-aminoacyl-tRNAs. Also deacylates mischarged glycyl-tRNA(Ala), protecting cells against glycine mischarging by AlaRS. Acts via tRNA-based rather than protein-based catalysis; rejects L-amino acids rather than detecting D-amino acids in the active site. By recycling D-aminoacyl-tRNA to D-amino acids and free tRNA molecules, this enzyme counteracts the toxicity associated with the formation of D-aminoacyl-tRNA entities in vivo and helps enforce protein L-homochirality. This is D-aminoacyl-tRNA deacylase from Mycolicibacterium smegmatis (strain ATCC 700084 / mc(2)155) (Mycobacterium smegmatis).